A 390-amino-acid chain; its full sequence is Mannitol-1-phosphate 5-dehydrogenase (390 aa).

7-18 (AVHFGGGNIGRG) is a binding site for NAD(+). Residue lysine 216 is part of the active site.

It belongs to the mannitol dehydrogenase family. Monomer.

It carries out the reaction D-mannitol 1-phosphate + NAD(+) = beta-D-fructose 6-phosphate + NADH + H(+). Catalyzes the NAD(H)-dependent interconversion of D-fructose 6-phosphate and D-mannitol 1-phosphate in the mannitol metabolic pathway. Required for the process of sporulation on senescing leaf material. This is Mannitol-1-phosphate 5-dehydrogenase (mpd1) from Phaeosphaeria nodorum (strain SN15 / ATCC MYA-4574 / FGSC 10173) (Glume blotch fungus).